Here is a 103-residue protein sequence, read N- to C-terminus: Alpha-ketoglutarate dehydrogenase component 4 (103 aa).

Met1 carries the N-acetylmethionine modification. Lys5 carries the post-translational modification N6-succinyllysine. The disordered stretch occupies residues 23–70; the sequence is IRFPDRRDNPKPNVSEVLRSAGLPSHTSSISQHSKGSKSPDWLMHQGP. The segment covering 47-61 has biased composition (low complexity); the sequence is SHTSSISQHSKGSKS. Residues Ser61 and Ser90 each carry the phosphoserine modification.

It belongs to the alpha-ketoglutarate dehydrogenase component 4 family. In terms of assembly, component of the 2-oxoglutarate dehydrogenase complex (OGDHC), composed of OGDH (2-oxoglutarate dehydrogenase; also called E1 subunit), DLST (dihydrolipoamide succinyltransferase; also called E2 subunit) and DLD (dihydrolipoamide dehydrogenase; also called E3 subunit), and the assembly factor KGD4. Within OGDHC complex, interacts (via N-terminus) with E3 subunit and (via C-terminus) with E2 subunit.

The protein resides in the mitochondrion. Its function is as follows. Molecular adapter that is necessary to form a stable 2-oxoglutarate dehydrogenase enzyme complex (OGDHC). Enables the specific recruitment of E3 subunit to E2 subunit in the 2-oxoglutarate dehydrogenase complex (OGDHC). In Bos taurus (Bovine), this protein is Alpha-ketoglutarate dehydrogenase component 4 (KGD4).